We begin with the raw amino-acid sequence, 656 residues long: Protein EMBRYO SAC DEVELOPMENT ARREST 30 (656 aa).

The chain crosses the membrane as a helical; Signal-anchor for type II membrane protein span at residues 9 to 29 (WIALFVLILSMGSLVVHLSMT). Residue Asn-119 is glycosylated (N-linked (GlcNAc...) asparagine). The tract at residues 381–426 (LSELVGPETPLPENTYKMPPRKSDKQLKEEWNKAGPRPRPLPPPPD) is disordered. Positions 401-412 (RKSDKQLKEEWN) are enriched in basic and acidic residues. Positions 417–426 (RPRPLPPPPD) are enriched in pro residues. Residues Asn-444, Asn-522, Asn-534, and Asn-544 are each glycosylated (N-linked (GlcNAc...) asparagine). The tract at residues 631–656 (SETEEEFAKSKVASAFDQDEEWDPND) is disordered. Over residues 647–656 (DQDEEWDPND) the composition is skewed to acidic residues.

It belongs to the glycosyltransferase GT106 family.

It localises to the membrane. The protein operates within glycan metabolism. In Arabidopsis thaliana (Mouse-ear cress), this protein is Protein EMBRYO SAC DEVELOPMENT ARREST 30.